Consider the following 160-residue polypeptide: Large ribosomal subunit protein uL22c (160 aa).

Belongs to the universal ribosomal protein uL22 family. Part of the 50S ribosomal subunit.

It localises to the plastid. Its subcellular location is the chloroplast. This protein binds specifically to 23S rRNA. Its function is as follows. The globular domain of the protein is located near the polypeptide exit tunnel on the outside of the subunit, while an extended beta-hairpin is found that lines the wall of the exit tunnel in the center of the 70S ribosome. In Aethionema grandiflorum (Persian stone-cress), this protein is Large ribosomal subunit protein uL22c (rpl22).